Here is a 942-residue protein sequence, read N- to C-terminus: UvrABC system protein A (942 aa).

Position 32 to 39 (32 to 39) interacts with ATP; that stretch reads GLSGSGKS. The C4-type zinc-finger motif lies at 251 to 278; the sequence is CPVCGFTVPELEPRLFSFNAPFGSCPTC. 2 consecutive ABC transporter domains span residues 308–589 and 609–937; these read WNPI…KKSI and GNGR…HYLK. ATP is bound at residue 641–648; sequence GVSGSGKS. Residues 740–766 form a C4-type zinc finger; that stretch reads CEACSGDGIIKIEMHFLPDVYVPCEVC.

The protein belongs to the ABC transporter superfamily. UvrA family. In terms of assembly, forms a heterotetramer with UvrB during the search for lesions.

The protein resides in the cytoplasm. In terms of biological role, the UvrABC repair system catalyzes the recognition and processing of DNA lesions. UvrA is an ATPase and a DNA-binding protein. A damage recognition complex composed of 2 UvrA and 2 UvrB subunits scans DNA for abnormalities. When the presence of a lesion has been verified by UvrB, the UvrA molecules dissociate. This is UvrABC system protein A from Streptococcus pyogenes serotype M1.